A 201-amino-acid polypeptide reads, in one-letter code: Large ribosomal subunit protein uL4 (201 aa).

The disordered stretch occupies residues 45–71 (AQKTRAEVTGSGKKPWRQKGTGRARAG).

This sequence belongs to the universal ribosomal protein uL4 family. In terms of assembly, part of the 50S ribosomal subunit.

Its function is as follows. One of the primary rRNA binding proteins, this protein initially binds near the 5'-end of the 23S rRNA. It is important during the early stages of 50S assembly. It makes multiple contacts with different domains of the 23S rRNA in the assembled 50S subunit and ribosome. In terms of biological role, forms part of the polypeptide exit tunnel. In Shewanella sp. (strain MR-4), this protein is Large ribosomal subunit protein uL4.